Reading from the N-terminus, the 297-residue chain is MTEVIDGNAVASDIRDDLTDAIATLADAGARPGLATVLMGDDPASETYVNMKQRDCEEVGIESYHVDVDGDAPPETLYDEIAALNQNDDVHGYIVQAPVPDHVDYREVIRRVDPQKDVDGFHPENVGRLVAGDARFRPCTPHGVQKLLEAADIDTEGKDVTIVGRSDIVGKPLANLLIQKADDGNATVTVCHSRTENLAAKTRRADIVVAAAGAPELVDGSMIGEGSVVIDVGVNRVDADNEKGYELVGDVEYESATQNASAITPVPGGVGPMTRAMLLYNTVKAASLQEDIDVALP.

Residues glycine 164–serine 166, serine 193, and valine 234 each bind NADP(+).

Belongs to the tetrahydrofolate dehydrogenase/cyclohydrolase family. In terms of assembly, homodimer.

The enzyme catalyses (6R)-5,10-methylene-5,6,7,8-tetrahydrofolate + NADP(+) = (6R)-5,10-methenyltetrahydrofolate + NADPH. It carries out the reaction (6R)-5,10-methenyltetrahydrofolate + H2O = (6R)-10-formyltetrahydrofolate + H(+). The protein operates within one-carbon metabolism; tetrahydrofolate interconversion. Functionally, catalyzes the oxidation of 5,10-methylenetetrahydrofolate to 5,10-methenyltetrahydrofolate and then the hydrolysis of 5,10-methenyltetrahydrofolate to 10-formyltetrahydrofolate. The polypeptide is Bifunctional protein FolD (Natronomonas pharaonis (strain ATCC 35678 / DSM 2160 / CIP 103997 / JCM 8858 / NBRC 14720 / NCIMB 2260 / Gabara) (Halobacterium pharaonis)).